The primary structure comprises 663 residues: Heparan-alpha-glucosaminide N-acetyltransferase (663 aa).

Positions 1-24 (MTGARASAAEQRRAGRSGQARAAE) are disordered. Topologically, residues 1 to 190 (MTGARASAAE…LAVNEDPVDS (190 aa)) are lumenal, vesicle. Asn-94, Asn-142, and Asn-162 each carry an N-linked (GlcNAc...) asparagine glycan. A disulfide bridge links Cys-151 with Cys-462. A helical membrane pass occupies residues 191–211 (NLPVSIAFLIGLAVIIVISFL). Residues 212-275 (RLLLSLDDFN…PRLRSVDTFR (64 aa)) are Cytoplasmic-facing. Phosphoserine occurs at positions 243 and 245. Residues 276–296 (GIALILMVFVNYGGGKYWYFK) traverse the membrane as a helical segment. His-297 is a catalytic residue. Residues 297–302 (HASWNG) are Lumenal, vesicle-facing. Residues 303–323 (LTVADLVFPWFVFIMGSSIFL) form a helical membrane-spanning segment. Over 324–345 (SMTSILQRGCSKFRLLGKIAWR) the chain is Cytoplasmic. The chain crosses the membrane as a helical span at residues 346–366 (SFLLICIGIIIVNPNYCLGPL). The Lumenal, vesicle segment spans residues 367–374 (SWDKVRIP). A helical transmembrane segment spans residues 375–395 (GVLQRLGVTYFVVAVLELLFA). Residues 396-420 (KPVPEHCASERSCLSLRDITSSWPQ) are Cytoplasmic-facing. The chain crosses the membrane as a helical span at residues 421–441 (WLLILVLEGLWLGLTFLLPVP). At 442 to 500 (GCPTGYLGPGGIGDFGKYPNCTGGAAGYIDRLLLGDDHLYQHPSSAVLYHTEVAYDPEG) the chain is on the lumenal, vesicle side. A helical membrane pass occupies residues 501–521 (ILGTINSIVMAFLGVQAGKIL). Over 522–529 (LYYKARTK) the chain is Cytoplasmic. Residues 530-550 (DILIRFTAWCCILGLISVALT) traverse the membrane as a helical segment. Topologically, residues 551 to 564 (KVSENEGFIPVNKN) are lumenal, vesicle. The helical transmembrane segment at 565 to 585 (LWSLSYVTTLSSFAFFILLVL) threads the bilayer. The Cytoplasmic portion of the chain corresponds to 586-592 (YPVVDVK). The helical transmembrane segment at 593 to 613 (GLWTGTPFFYPGMNSILVYVG) threads the bilayer. Residues 614–634 (HEVFENYFPFQWKLKDNQSHK) are Lumenal, vesicle-facing. The lysosomal targeting region stretch occupies residues 624 to 635 (QWKLKDNQSHKE). Residues 635 to 655 (EHLTQNIVATALWVLIAYILY) traverse the membrane as a helical segment. Residues 656–663 (RKKIFWKI) are Cytoplasmic-facing.

As to quaternary structure, homooligomer. Homooligomerization is necessary for enzyme activity. In terms of processing, undergoes intralysosomal proteolytic cleavage; occurs within the end of the first and/or the beginning of the second luminal domain and is essential for the activation of the enzyme. Glycosylated. Widely expressed, with highest level in leukocytes, heart, liver, skeletal muscle, lung, placenta and liver.

It localises to the lysosome membrane. The catalysed reaction is alpha-D-glucosaminyl-[heparan sulfate](n) + acetyl-CoA = N-acetyl-alpha-D-glucosaminyl-[heparan sulfate](n) + CoA + H(+). Lysosomal acetyltransferase that acetylates the non-reducing terminal alpha-glucosamine residue of intralysosomal heparin or heparan sulfate, converting it into a substrate for luminal alpha-N-acetyl glucosaminidase. This is Heparan-alpha-glucosaminide N-acetyltransferase (HGSNAT) from Homo sapiens (Human).